The primary structure comprises 305 residues: Mitochondrial brown fat uncoupling protein 1 (305 aa).

Over 1–10 (MVGHAATDVP) the chain is Mitochondrial intermembrane. The helical transmembrane segment at 11-32 (PTMAVKIFSAGVAACVADIITF) threads the bilayer. Solcar repeat units follow at residues 11–102 (PTMA…VQEF), 109–199 (ASLG…MKEA), and 208–293 (DDVP…LKRE). At 33–73 (PLDTAKVRLQIQGECLTSSAFRYKGVLGTIITLAKTEGPVK) the chain is on the mitochondrial matrix side. Lys-56 provides a ligand contact to fatty acid 16:0. Residues 74 to 96 (LYSGLPAGLQRQISFASLRIGLY) form a helical membrane-spanning segment. At 97–114 (DTVQEFFTTGKEASLGSK) the chain is on the mitochondrial intermembrane side. The chain crosses the membrane as a helical span at residues 115–131 (ISAGLTTGGVAVFIGQP). The Mitochondrial matrix segment spans residues 132–176 (TEVVKVRLQAQSHLHGPKPRYTGTYNAYRIIATTEGLTGLWKGTT). The helical transmembrane segment at 177–193 (PNLTRNVIINCTELVTY) threads the bilayer. Residues 194 to 210 (DLMKEALVKNKLLADDV) lie on the Mitochondrial intermembrane side of the membrane. The helical transmembrane segment at 211–230 (PCHFVSAVVAGFCTTVLSSP) threads the bilayer. At 231 to 264 (VDVVKTRFVNSSPGQYTSVPNCAMMMLTREGPSA) the chain is on the mitochondrial matrix side. A Cysteine sulfenic acid (-SOH) modification is found at Cys-252. Residues 265–287 (FFKGFVPSFLRLGSWNIIMFVCF) form a helical membrane-spanning segment. Lys-267 is a fatty acid 16:0 binding site. The Mitochondrial intermembrane segment spans residues 288-305 (EQLKRELMKSRQAMDCAT).

It belongs to the mitochondrial carrier (TC 2.A.29) family. Most probably functions as a monomer. Binds one purine nucleotide per monomer. However, has also been suggested to function as a homodimer or a homotetramer. Tightly associates with cardiolipin in the mitochondrion inner membrane; may stabilize and regulate its activity. May undergo sulfenylation upon cold exposure. May increase the sensitivity of UCP1 thermogenic function to the activation by noradrenaline probably through structural effects. Post-translationally, may undergo ubiquitin-mediated proteasomal degradation.

It is found in the mitochondrion inner membrane. It carries out the reaction H(+)(in) = H(+)(out). Has no constitutive proton transporter activity and has to be activated by long-chain fatty acids/LCFAs. Inhibited by purine nucleotides. Both purine nucleotides and LCFAs bind the cytosolic side of the transporter and directly compete to activate or inhibit it. Activated by noradrenaline and reactive oxygen species. Despite lacking canonical translational encoding for selenocysteine, a small pool of the protein has been observed to selectively incorporate selenocysteine at 'Cys-252'. Selenocysteine-modified protein is highly sensitive to redox modification and may constitute a pool of protein highly sensitive to activation by elevated levels of reactive oxygen species (ROS). Mitochondrial protein responsible for thermogenic respiration, a specialized capacity of brown adipose tissue and beige fat that participates in non-shivering adaptive thermogenesis to temperature and diet variations and more generally to the regulation of energy balance. Functions as a long-chain fatty acid/LCFA and proton symporter, simultaneously transporting one LCFA and one proton through the inner mitochondrial membrane. However, LCFAs remaining associated with the transporter via their hydrophobic tails, it results in an apparent transport of protons activated by LCFAs. Thereby, dissipates the mitochondrial proton gradient and converts the energy of substrate oxydation into heat instead of ATP. Regulates the production of reactive oxygen species/ROS by mitochondria. This is Mitochondrial brown fat uncoupling protein 1 from Ovis aries (Sheep).